A 132-amino-acid chain; its full sequence is Intraflagellar transport protein 20 homolog (132 aa).

The IFT57-binding stretch occupies residues 70–132 (MKAIGARNLL…EFIDQFIFQK (63 aa)). A coiled-coil region spans residues 74–114 (GARNLLKSIAKQREAQQQQLQALIAEKKMQLERYRVEYEAL).

Component of the IFT complex B, at least composed of IFT20, IFT22, IFT25, IFT27, IFT46, IFT52, TRAF3IP1/IFT54, IFT57, IFT74, IFT80, IFT81, and IFT88. Interacts directly with IFT57 and KIF3B/Kinesin II subunit. Interacts with IFT88. Interacts with CEP83. Interacts with SPEF2 (via C-terminus). Interacts with CBL and CBLB. Interacts with TRIP11. Interacts with TTC21A. Interacts with SPATA1. Interacts with USH1G. Interacts with CCDC146. Interacts with CEP78; regulating IFT20 stability and localization. In terms of tissue distribution, expressed in almost all tissues.

The protein resides in the golgi apparatus. Its subcellular location is the cis-Golgi network. It localises to the cytoplasm. It is found in the cytoskeleton. The protein localises to the microtubule organizing center. The protein resides in the centrosome. Its subcellular location is the centriole. It localises to the cilium basal body. It is found in the cell projection. The protein localises to the cilium. The protein resides in the cytoplasmic vesicle. Its subcellular location is the secretory vesicle. It localises to the acrosome. Its function is as follows. Part of intraflagellar transport (IFT) particles involved in ciliary process assembly. May play a role in the trafficking of ciliary membrane proteins from the Golgi complex to the cilium. Regulates the platelet-derived growth factor receptor-alpha (PDGFRA) signaling pathway. Required for protein stability of E3 ubiquitin ligases CBL and CBLB that mediate ubiquitination and internalization of PDGFRA for proper feedback inhibition of PDGFRA signaling. Essential for male fertility. Plays an important role in spermatogenesis, particularly spermiogenesis, when germ cells form flagella. May play a role in the transport of flagellar proteins ODF2 and SPAG16 to build sperm flagella and in the removal of redundant sperm cytoplasm. Also involved in autophagy since it is required for trafficking of ATG16L and the expansion of the autophagic compartment. The protein is Intraflagellar transport protein 20 homolog (IFT20) of Homo sapiens (Human).